The sequence spans 33 residues: Dermonecrotic toxin LbSicTox-alphaIB1b (33 aa).

Histidine 11 is a catalytic residue. The Mg(2+) site is built by glutamate 31 and aspartate 33.

It belongs to the arthropod phospholipase D family. Class II subfamily. Mg(2+) is required as a cofactor. Contains 2 disulfide bonds. Expressed by the venom gland.

The protein localises to the secreted. The catalysed reaction is an N-(acyl)-sphingosylphosphocholine = an N-(acyl)-sphingosyl-1,3-cyclic phosphate + choline. It carries out the reaction an N-(acyl)-sphingosylphosphoethanolamine = an N-(acyl)-sphingosyl-1,3-cyclic phosphate + ethanolamine. It catalyses the reaction a 1-acyl-sn-glycero-3-phosphocholine = a 1-acyl-sn-glycero-2,3-cyclic phosphate + choline. The enzyme catalyses a 1-acyl-sn-glycero-3-phosphoethanolamine = a 1-acyl-sn-glycero-2,3-cyclic phosphate + ethanolamine. Dermonecrotic toxins cleave the phosphodiester linkage between the phosphate and headgroup of certain phospholipids (sphingolipid and lysolipid substrates), forming an alcohol (often choline) and a cyclic phosphate. This toxin acts on sphingomyelin (SM) with high activity (9.5 U/mg). It may also act on ceramide phosphoethanolamine (CPE), lysophosphatidylcholine (LPC) and lysophosphatidylethanolamine (LPE), but not on lysophosphatidylserine (LPS), and lysophosphatidylglycerol (LPG). It acts by transphosphatidylation, releasing exclusively cyclic phosphate products as second products. Induces dermonecrosis, hemolysis, increased vascular permeability, edema, inflammatory response, and platelet aggregation. The polypeptide is Dermonecrotic toxin LbSicTox-alphaIB1b (Loxosceles boneti (North American fiddleback spider)).